The primary structure comprises 263 residues: 3-methyl-2-oxobutanoate hydroxymethyltransferase (263 aa).

Aspartate 45 and aspartate 84 together coordinate Mg(2+). Residues 45-46 (DS), aspartate 84, and lysine 112 contribute to the 3-methyl-2-oxobutanoate site. Glutamate 114 contacts Mg(2+). Glutamate 181 acts as the Proton acceptor in catalysis.

This sequence belongs to the PanB family. In terms of assembly, homodecamer; pentamer of dimers. Mg(2+) is required as a cofactor.

It localises to the cytoplasm. The catalysed reaction is 3-methyl-2-oxobutanoate + (6R)-5,10-methylene-5,6,7,8-tetrahydrofolate + H2O = 2-dehydropantoate + (6S)-5,6,7,8-tetrahydrofolate. It participates in cofactor biosynthesis; (R)-pantothenate biosynthesis; (R)-pantoate from 3-methyl-2-oxobutanoate: step 1/2. Its function is as follows. Catalyzes the reversible reaction in which hydroxymethyl group from 5,10-methylenetetrahydrofolate is transferred onto alpha-ketoisovalerate to form ketopantoate. This Photorhabdus laumondii subsp. laumondii (strain DSM 15139 / CIP 105565 / TT01) (Photorhabdus luminescens subsp. laumondii) protein is 3-methyl-2-oxobutanoate hydroxymethyltransferase.